A 132-amino-acid chain; its full sequence is MSTHDPISDLITRIRNAQMRNKSKVSTPGSRMRANVLEVLKSEGYIRGYASVEHSSGRSELEIELKYFDGEPVIREIERISRPGRRVYASVKNLPRVKNGLGISVLSTPKGIMADHEARDANVGGEVLFTVF.

It belongs to the universal ribosomal protein uS8 family. In terms of assembly, part of the 30S ribosomal subunit. Contacts proteins S5 and S12.

One of the primary rRNA binding proteins, it binds directly to 16S rRNA central domain where it helps coordinate assembly of the platform of the 30S subunit. The sequence is that of Small ribosomal subunit protein uS8 from Nitrobacter hamburgensis (strain DSM 10229 / NCIMB 13809 / X14).